Here is a 126-residue protein sequence, read N- to C-terminus: Small ribosomal subunit protein uS12 (126 aa).

The disordered stretch occupies residues 1-26; the sequence is MPTINQLVRKGRASETTKSKSPALQD. Aspartate 89 carries the 3-methylthioaspartic acid modification. Residues 101–126 form a disordered region; sequence SLDTQGVKDRKQARSKYGAKRAKAAK. Basic residues predominate over residues 113–126; that stretch reads ARSKYGAKRAKAAK.

Belongs to the universal ribosomal protein uS12 family. Part of the 30S ribosomal subunit. Contacts proteins S8 and S17. May interact with IF1 in the 30S initiation complex.

Its function is as follows. With S4 and S5 plays an important role in translational accuracy. In terms of biological role, interacts with and stabilizes bases of the 16S rRNA that are involved in tRNA selection in the A site and with the mRNA backbone. Located at the interface of the 30S and 50S subunits, it traverses the body of the 30S subunit contacting proteins on the other side and probably holding the rRNA structure together. The combined cluster of proteins S8, S12 and S17 appears to hold together the shoulder and platform of the 30S subunit. The polypeptide is Small ribosomal subunit protein uS12 (Burkholderia pseudomallei (strain 1106a)).